The sequence spans 638 residues: Octopamine receptor 1 (638 aa).

Residues 1-28 are Extracellular-facing; it reads MSRDIFMKRLRLHLLFDEVAMVTHIVGD. Residues 29–53 traverse the membrane as a helical segment; that stretch reads VLSSVLLCAVVLLVLVGNTLVVAAV. Topologically, residues 54–64 are cytoplasmic; the sequence is ATSRKLRTVTN. A helical transmembrane segment spans residues 65–87; the sequence is VFIVNLACADLLLGVLVLPFSAV. Topologically, residues 88–102 are extracellular; it reads NEIKDVWIFGHVWCQ. Cysteine 101 and cysteine 230 are oxidised to a cystine. Residues 103–124 form a helical membrane-spanning segment; that stretch reads VWLAVDVWLCTASILNLCCISL. Over 125-147 the chain is Cytoplasmic; it reads DRYLAITRPIRYPGLMSAKRAKT. The helical transmembrane segment at 148–167 threads the bilayer; the sequence is LVAGVWLFSFVICCPPLIGW. Over 168–239 the chain is Extracellular; the sequence is NDGGDGIMDY…CELTNSRGYR (72 aa). Asparagine 178, asparagine 207, and asparagine 215 each carry an N-linked (GlcNAc...) asparagine glycan. A helical membrane pass occupies residues 240–259; it reads IYAALGSFFIPMLVMVFFYL. Residues 260 to 520 lie on the Cytoplasmic side of the membrane; the sequence is QIYRAAVKTI…FNREKKAAKT (261 aa). A helical membrane pass occupies residues 521–545; it reads LAIIVGAFIMCWMPFFTIYLVGAFC. At 546-551 the chain is on the extracellular side; that stretch reads ENCISP. Residues 552–575 form a helical membrane-spanning segment; that stretch reads IVFSVAFWLGYCNSAMNPCVYALF. Residues 576-638 are Cytoplasmic-facing; that stretch reads SRDFRFAFRK…TASGGNGGYT (63 aa). Residues 618-638 are disordered; the sequence is DDAKSSSDIGPTASGGNGGYT.

This sequence belongs to the G-protein coupled receptor 1 family. Expressed in the central nervous system.

The protein resides in the cell membrane. Functionally, G-protein coupled receptor for octopamine (OA), which is a neurotransmitter, neurohormone, and neuromodulator in invertebrates. Activation of this receptor by octopamine induces an increase in both inositol phosphates and cyclic AMP. The coupling to adenylyl cyclase seems to be less efficient than the coupling to phospholipase C. The rank order of potency for agonists is p-synephrine &gt;= clonidine &gt; p-octopamine = xylometazoline = phenylephrine = oxymetazoline &gt; B-HT920 &gt; serotonin = p-tyramine &gt; epinephrine &gt; norepinephrine &gt; methoxamine = dopamine = histamine. For antagonists, the rank order is yohimbine &gt; chlopromazine / spiperone &gt; phentolamine &gt; mianserine &gt; rauwolscine &gt; prazosin &gt; alprenolol / propanolol &gt; pindolol. This Lymnaea stagnalis (Great pond snail) protein is Octopamine receptor 1.